The primary structure comprises 359 residues: Phospho-N-acetylmuramoyl-pentapeptide-transferase (359 aa).

Helical transmembrane passes span 3-23, 55-75, 84-104, 120-140, 156-176, 187-207, 231-251, 255-275, 280-300, and 334-354; these read QILI…PVLI, VAIL…GLAL, GLLV…DDLI, TVGI…FGNA, IATV…LVSA, LDGL…LITF, LALV…WNAA, IFMG…LSVT, ILAV…VVQI, and FWLL…GEWL.

It belongs to the glycosyltransferase 4 family. MraY subfamily. Requires Mg(2+) as cofactor.

The protein localises to the cell membrane. The enzyme catalyses UDP-N-acetyl-alpha-D-muramoyl-L-alanyl-gamma-D-glutamyl-meso-2,6-diaminopimeloyl-D-alanyl-D-alanine + di-trans,octa-cis-undecaprenyl phosphate = di-trans,octa-cis-undecaprenyl diphospho-N-acetyl-alpha-D-muramoyl-L-alanyl-D-glutamyl-meso-2,6-diaminopimeloyl-D-alanyl-D-alanine + UMP. It functions in the pathway cell wall biogenesis; peptidoglycan biosynthesis. Functionally, catalyzes the initial step of the lipid cycle reactions in the biosynthesis of the cell wall peptidoglycan: transfers peptidoglycan precursor phospho-MurNAc-pentapeptide from UDP-MurNAc-pentapeptide onto the lipid carrier undecaprenyl phosphate, yielding undecaprenyl-pyrophosphoryl-MurNAc-pentapeptide, known as lipid I. The chain is Phospho-N-acetylmuramoyl-pentapeptide-transferase from Mycobacterium sp. (strain JLS).